A 128-amino-acid polypeptide reads, in one-letter code: Large ribosomal subunit protein eL31 (128 aa).

The protein belongs to the eukaryotic ribosomal protein eL31 family.

This chain is Large ribosomal subunit protein eL31 (RpL31), found in Drosophila virilis (Fruit fly).